A 463-amino-acid chain; its full sequence is Secretogranin-3 (463 aa).

The N-terminal stretch at 1–20 (MGPKYVFITAIIGVFWHVQG) is a signal peptide. Disordered stretches follow at residues 87–111 (VKRSGSVRSSVGGHRGTLDDADSTK), 225–267 (DDDK…PEED), and 353–398 (EDKN…KGKA). Basic and acidic residues-rich tracts occupy residues 102–111 (GTLDDADSTK) and 229–262 (QEGKMETRNKNEDRESSETKNEDSFSSKERRNEL).

In terms of assembly, interacts with CHGA. Interacts with secretogranin II/SCG2. Interacts (via C-terminus) with CPE.

It is found in the cytoplasmic vesicle. The protein resides in the secretory vesicle. It localises to the secretory vesicle membrane. Its subcellular location is the secreted. In terms of biological role, member of the granin protein family that regulates the biogenesis of secretory granules. Acts as a sorting receptor for intragranular proteins including chromogranin A/CHGA. May also play a role in angiogenesis. Promotes endothelial proliferation, migration and tube formation through MEK/ERK signaling pathway. The protein is Secretogranin-3 (scg3) of Xenopus tropicalis (Western clawed frog).